The chain runs to 265 residues: Tryptophan synthase alpha chain (265 aa).

Catalysis depends on proton acceptor residues Glu49 and Asp60.

It belongs to the TrpA family. Tetramer of two alpha and two beta chains.

It catalyses the reaction (1S,2R)-1-C-(indol-3-yl)glycerol 3-phosphate + L-serine = D-glyceraldehyde 3-phosphate + L-tryptophan + H2O. The protein operates within amino-acid biosynthesis; L-tryptophan biosynthesis; L-tryptophan from chorismate: step 5/5. In terms of biological role, the alpha subunit is responsible for the aldol cleavage of indoleglycerol phosphate to indole and glyceraldehyde 3-phosphate. The protein is Tryptophan synthase alpha chain of Cupriavidus metallidurans (strain ATCC 43123 / DSM 2839 / NBRC 102507 / CH34) (Ralstonia metallidurans).